We begin with the raw amino-acid sequence, 184 residues long: Putative manganese efflux pump MntP (184 aa).

5 consecutive transmembrane segments (helical) span residues 39–59 (IFGV…LSFV), 65–85 (IDHF…ILEA), 102–122 (LALG…TFSF), 132–152 (LIIG…GKIL), and 161–181 (LVLG…THLV).

It belongs to the MntP (TC 9.B.29) family.

It is found in the cell inner membrane. In terms of biological role, probably functions as a manganese efflux pump. This is Putative manganese efflux pump MntP from Campylobacter curvus (strain 525.92).